The sequence spans 135 residues: Large ribosomal subunit protein uL16c (135 aa).

The interval 1–20 is disordered; sequence MLSPKRTRFRKQHRGRMKGK.

The protein belongs to the universal ribosomal protein uL16 family. As to quaternary structure, part of the 50S ribosomal subunit.

The protein localises to the plastid. The protein resides in the chloroplast. This is Large ribosomal subunit protein uL16c from Landoltia punctata (Dotted duckmeat).